The following is a 520-amino-acid chain: Putative cytochrome P450 CYP13A3 (520 aa).

Cys-464 contributes to the heme binding site.

It belongs to the cytochrome P450 family. Heme is required as a cofactor.

In terms of biological role, cytochromes P450 are a group of heme-thiolate monooxygenases. They oxidize a variety of structurally unrelated compounds, including steroids, fatty acids, and xenobiotics. In Caenorhabditis elegans, this protein is Putative cytochrome P450 CYP13A3 (cyp-13A3).